The primary structure comprises 348 residues: Dihydroorotase (348 aa).

Residues H14 and H16 each contribute to the Zn(2+) site. Substrate is bound by residues 16-18 (HLR) and N42. Zn(2+) is bound by residues K100, H137, and H175. K100 carries the N6-carboxylysine modification. H137 serves as a coordination point for substrate. L220 serves as a coordination point for substrate. Residue D248 coordinates Zn(2+). D248 is a catalytic residue. Substrate-binding residues include H252 and A264.

The protein belongs to the metallo-dependent hydrolases superfamily. DHOase family. Class II DHOase subfamily. As to quaternary structure, homodimer. It depends on Zn(2+) as a cofactor.

The enzyme catalyses (S)-dihydroorotate + H2O = N-carbamoyl-L-aspartate + H(+). It participates in pyrimidine metabolism; UMP biosynthesis via de novo pathway; (S)-dihydroorotate from bicarbonate: step 3/3. Its function is as follows. Catalyzes the reversible cyclization of carbamoyl aspartate to dihydroorotate. The polypeptide is Dihydroorotase (Pseudomonas aeruginosa (strain ATCC 15692 / DSM 22644 / CIP 104116 / JCM 14847 / LMG 12228 / 1C / PRS 101 / PAO1)).